An 89-amino-acid polypeptide reads, in one-letter code: Neurotoxin beta-KTx 52.1 (89 aa).

Residues 1 to 20 form the signal peptide; that stretch reads MKQYIFFLALIVLTATFAEA. A propeptide spanning residues 21–39 is cleaved from the precursor; it reads GKKTEILDKVKKVFSKAKD. One can recognise a BetaSPN-type CS-alpha/beta domain in the interval 53–89; sequence ELGCPFIDKWCEDHCDSKKLVGKCENFDCSCVKLGGK. 3 disulfide bridges follow: Cys-56/Cys-76, Cys-63/Cys-81, and Cys-67/Cys-83.

The protein belongs to the long chain scorpion toxin family. Class 2 subfamily. Expressed by the venom gland.

Its subcellular location is the secreted. In terms of biological role, inhibits voltage-gated potassium channel. The sequence is that of Neurotoxin beta-KTx 52.1 from Lychas mucronatus (Chinese swimming scorpion).